Here is a 113-residue protein sequence, read N- to C-terminus: Ribulose bisphosphate carboxylase small subunit (113 aa).

This sequence belongs to the RuBisCO small chain family. Heterohexadecamer of 8 large and 8 small subunits. RuBisCO interacts with the C-terminus of CcmM, and can be found in complexes that also include carbonic anhydrase (ccaA).

Its subcellular location is the carboxysome. In terms of biological role, ruBisCO catalyzes two reactions: the carboxylation of D-ribulose 1,5-bisphosphate, the primary event in carbon dioxide fixation, as well as the oxidative fragmentation of the pentose substrate in the photorespiration process. Both reactions occur simultaneously and in competition at the same active site. Although the small subunit is not catalytic it is essential for maximal activity. The polypeptide is Ribulose bisphosphate carboxylase small subunit (Synechocystis sp. (strain ATCC 27184 / PCC 6803 / Kazusa)).